The chain runs to 363 residues: Alanine racemase (363 aa).

K35 serves as the catalytic Proton acceptor; specific for D-alanine. K35 carries the N6-(pyridoxal phosphate)lysine modification. R134 is a substrate binding site. Y259 serves as the catalytic Proton acceptor; specific for L-alanine. Residue M307 participates in substrate binding.

Belongs to the alanine racemase family. Pyridoxal 5'-phosphate serves as cofactor.

The catalysed reaction is L-alanine = D-alanine. Its pathway is amino-acid biosynthesis; D-alanine biosynthesis; D-alanine from L-alanine: step 1/1. Catalyzes the interconversion of L-alanine and D-alanine. May also act on other amino acids. This chain is Alanine racemase (alr), found in Shewanella denitrificans (strain OS217 / ATCC BAA-1090 / DSM 15013).